The sequence spans 225 residues: Orotate phosphoribosyltransferase (225 aa).

Residues Arg107, Lys108, Lys111, and 133-141 contribute to the 5-phospho-alpha-D-ribose 1-diphosphate site; that span reads EDLTTDGGS. Thr137 lines the orotate pocket.

This sequence belongs to the purine/pyrimidine phosphoribosyltransferase family. PyrE subfamily. Homodimer. Requires Mg(2+) as cofactor.

The enzyme catalyses orotidine 5'-phosphate + diphosphate = orotate + 5-phospho-alpha-D-ribose 1-diphosphate. Its pathway is pyrimidine metabolism; UMP biosynthesis via de novo pathway; UMP from orotate: step 1/2. In terms of biological role, catalyzes the transfer of a ribosyl phosphate group from 5-phosphoribose 1-diphosphate to orotate, leading to the formation of orotidine monophosphate (OMP). In Roseobacter denitrificans (strain ATCC 33942 / OCh 114) (Erythrobacter sp. (strain OCh 114)), this protein is Orotate phosphoribosyltransferase.